Reading from the N-terminus, the 164-residue chain is uncharacterized protein (164 aa).

The region spanning 28–157 is the HTH marR-type domain; it reads EAEILYQLQG…LIDVLARMRN (130 aa). Positions 71-94 form a DNA-binding region, H-T-H motif; it reads QSDLQKKVNIDSAAVTRHLKQLES.

This is an uncharacterized protein from Bacillus subtilis (strain 168).